We begin with the raw amino-acid sequence, 207 residues long: uncharacterized protein (207 aa).

5 helical membrane-spanning segments follow: residues 28–48 (IAVLLPLIEAFLPFLPLIVFV), 59–79 (EGFILSWAGSTAGSILVFLIV), 112–132 (MFLLLCFPFTPSAAVNVVAGL), 140–160 (FILAAASGKLVMIFMISFIGY), and 165–185 (LITQPIRTVIAVLVITVLWYV).

It is found in the cell membrane. This is an uncharacterized protein from Bacillus subtilis (strain 168).